The following is a 184-amino-acid chain: Ribosome-recycling factor (184 aa).

Belongs to the RRF family.

Its subcellular location is the cytoplasm. Responsible for the release of ribosomes from messenger RNA at the termination of protein biosynthesis. May increase the efficiency of translation by recycling ribosomes from one round of translation to another. This chain is Ribosome-recycling factor, found in Hyphomonas neptunium (strain ATCC 15444).